We begin with the raw amino-acid sequence, 342 residues long: Hydrogenase expression/formation protein HupV (342 aa).

It belongs to the HupK family.

This chain is Hydrogenase expression/formation protein HupV (hupV), found in Azotobacter chroococcum mcd 1.